A 330-amino-acid chain; its full sequence is Phenylalanine--tRNA ligase alpha subunit (330 aa).

Residue E255 participates in Mg(2+) binding.

This sequence belongs to the class-II aminoacyl-tRNA synthetase family. Phe-tRNA synthetase alpha subunit type 1 subfamily. Tetramer of two alpha and two beta subunits. The cofactor is Mg(2+).

It localises to the cytoplasm. It carries out the reaction tRNA(Phe) + L-phenylalanine + ATP = L-phenylalanyl-tRNA(Phe) + AMP + diphosphate + H(+). In Acinetobacter baumannii (strain AYE), this protein is Phenylalanine--tRNA ligase alpha subunit.